Here is a 285-residue protein sequence, read N- to C-terminus: Ribosomal RNA small subunit methyltransferase I (285 aa).

The protein belongs to the methyltransferase superfamily. RsmI family.

It is found in the cytoplasm. The enzyme catalyses cytidine(1402) in 16S rRNA + S-adenosyl-L-methionine = 2'-O-methylcytidine(1402) in 16S rRNA + S-adenosyl-L-homocysteine + H(+). Catalyzes the 2'-O-methylation of the ribose of cytidine 1402 (C1402) in 16S rRNA. The chain is Ribosomal RNA small subunit methyltransferase I from Mycobacterium tuberculosis (strain CDC 1551 / Oshkosh).